Consider the following 232-residue polypeptide: Large ribosomal subunit protein uL1 (232 aa).

Belongs to the universal ribosomal protein uL1 family. Part of the 50S ribosomal subunit.

Functionally, binds directly to 23S rRNA. The L1 stalk is quite mobile in the ribosome, and is involved in E site tRNA release. Its function is as follows. Protein L1 is also a translational repressor protein, it controls the translation of the L11 operon by binding to its mRNA. The protein is Large ribosomal subunit protein uL1 of Paraburkholderia xenovorans (strain LB400).